The chain runs to 110 residues: Integration host factor subunit alpha (110 aa).

It belongs to the bacterial histone-like protein family. Heterodimer of an alpha and a beta chain.

Its function is as follows. This protein is one of the two subunits of integration host factor, a specific DNA-binding protein that functions in genetic recombination as well as in transcriptional and translational control. The sequence is that of Integration host factor subunit alpha from Bdellovibrio bacteriovorus (strain ATCC 15356 / DSM 50701 / NCIMB 9529 / HD100).